The primary structure comprises 301 residues: Methionyl-tRNA formyltransferase (301 aa).

109 to 112 contacts (6S)-5,6,7,8-tetrahydrofolate; sequence SLLP.

It belongs to the Fmt family.

The enzyme catalyses L-methionyl-tRNA(fMet) + (6R)-10-formyltetrahydrofolate = N-formyl-L-methionyl-tRNA(fMet) + (6S)-5,6,7,8-tetrahydrofolate + H(+). Its function is as follows. Attaches a formyl group to the free amino group of methionyl-tRNA(fMet). The formyl group appears to play a dual role in the initiator identity of N-formylmethionyl-tRNA by promoting its recognition by IF2 and preventing the misappropriation of this tRNA by the elongation apparatus. This is Methionyl-tRNA formyltransferase from Anaplasma marginale (strain St. Maries).